A 362-amino-acid chain; its full sequence is MRPAHAVIDLDALRHNYRFARRLGGGKALAVVKADAYGHGAVRCAQALEAEVDGFAVACIEEALELRQAGIQAPILLLEGFFEAEELELIAKHNLWTVIASSWQVRALAAFHSPSPIGVWLKLDSGMHRLGLEPKEFRDAWMSLHRLPQVGEIVLMTHLARADELDNPRTNEQASVFAQASQGMVAPASVCNSSGLLGWAGLYSDWGRPGLMLYGVNPIPQESTSLSGPLRPVMMVYSRLIAVHELPAGEPVGYGACFVTERPTRVGVVAMGYADGYPYFAVNGTPLLVDGRVCPLIGRVSMDMLTVDLTDHPQADVGSQVQLWGVQPGVAELAAHCNLSAYQLLCGLKRVRRYYLGEMGAV.

Catalysis depends on Lys-33, which acts as the Proton acceptor; specific for D-alanine. An N6-(pyridoxal phosphate)lysine modification is found at Lys-33. Arg-129 contacts substrate. Tyr-254 acts as the Proton acceptor; specific for L-alanine in catalysis. Substrate is bound at residue Met-302.

It belongs to the alanine racemase family. It depends on pyridoxal 5'-phosphate as a cofactor.

The enzyme catalyses L-alanine = D-alanine. It functions in the pathway amino-acid biosynthesis; D-alanine biosynthesis; D-alanine from L-alanine: step 1/1. In terms of biological role, catalyzes the interconversion of L-alanine and D-alanine. May also act on other amino acids. The sequence is that of Alanine racemase (alr) from Xylella fastidiosa (strain 9a5c).